The primary structure comprises 105 residues: Large ribosomal subunit protein bL21 (105 aa).

The protein belongs to the bacterial ribosomal protein bL21 family. As to quaternary structure, part of the 50S ribosomal subunit. Contacts protein L20.

This protein binds to 23S rRNA in the presence of protein L20. The chain is Large ribosomal subunit protein bL21 from Rickettsia bellii (strain OSU 85-389).